Consider the following 310-residue polypeptide: N-acetyl-gamma-glutamyl-phosphate reductase (310 aa).

Cys117 is a catalytic residue.

The protein belongs to the NAGSA dehydrogenase family. Type 2 subfamily.

The protein resides in the cytoplasm. It catalyses the reaction N-acetyl-L-glutamate 5-semialdehyde + phosphate + NADP(+) = N-acetyl-L-glutamyl 5-phosphate + NADPH + H(+). Its pathway is amino-acid biosynthesis; L-arginine biosynthesis; N(2)-acetyl-L-ornithine from L-glutamate: step 3/4. In terms of biological role, catalyzes the NADPH-dependent reduction of N-acetyl-5-glutamyl phosphate to yield N-acetyl-L-glutamate 5-semialdehyde. The chain is N-acetyl-gamma-glutamyl-phosphate reductase from Rhizobium johnstonii (strain DSM 114642 / LMG 32736 / 3841) (Rhizobium leguminosarum bv. viciae).